The chain runs to 156 residues: Riboflavin synthase (156 aa).

The protein belongs to the DMRL synthase family.

The catalysed reaction is 2 6,7-dimethyl-8-(1-D-ribityl)lumazine + H(+) = 5-amino-6-(D-ribitylamino)uracil + riboflavin. It functions in the pathway cofactor biosynthesis; riboflavin biosynthesis; riboflavin from 2-hydroxy-3-oxobutyl phosphate and 5-amino-6-(D-ribitylamino)uracil: step 2/2. This chain is Riboflavin synthase (ribC), found in Methanocaldococcus jannaschii (strain ATCC 43067 / DSM 2661 / JAL-1 / JCM 10045 / NBRC 100440) (Methanococcus jannaschii).